An 85-amino-acid chain; its full sequence is U4-theraphotoxin-Hhn1q (85 aa).

The N-terminal stretch at M1 to A22 is a signal peptide. Residues E23–R48 constitute a propeptide that is removed on maturation. 3 disulfide bridges follow: C52-C66, C56-C77, and C71-C82.

Belongs to the neurotoxin 12 (Hwtx-2) family. 02 (Hwtx-2) subfamily. As to expression, expressed by the venom gland.

It is found in the secreted. Functionally, postsynaptic neurotoxin. The chain is U4-theraphotoxin-Hhn1q from Cyriopagopus hainanus (Chinese bird spider).